Here is a 279-residue protein sequence, read N- to C-terminus: MAIRKHKPTTPGRRGSSVADFVEITRTTPEKSLVRPLPKKGGRNNTGRITTRHKGGGHKRQYRVIDFRRHDKDGVDAKVAHIEYDPNRTARIALLHYVDGTKRYIIAPNRLQQGDVVESGPNADIKPGNNLPLRNIPVGTVLHAVELRPGGGAKLARSAGASVQLVAREGKYGQLRLPSGEIRNVDVRCRATIGEVGNAEQSNINWGKAGRNRWKGVRPTVRGVVMNPVDHPHGGGEGKTSGGRHPVNPNGKPEGRTRRPNKESDKLIVRRRRTGKNKR.

Disordered stretches follow at residues 30 to 59 and 225 to 279; these read EKSL…GGHK and VMNP…KNKR. Residues 50–59 show a composition bias toward basic residues; it reads TTRHKGGGHK. The span at 253-268 shows a compositional bias: basic and acidic residues; it reads PEGRTRRPNKESDKLI. A compositionally biased stretch (basic residues) spans 269 to 279; it reads VRRRRTGKNKR.

The protein belongs to the universal ribosomal protein uL2 family. Part of the 50S ribosomal subunit. Forms a bridge to the 30S subunit in the 70S ribosome.

Functionally, one of the primary rRNA binding proteins. Required for association of the 30S and 50S subunits to form the 70S ribosome, for tRNA binding and peptide bond formation. It has been suggested to have peptidyltransferase activity; this is somewhat controversial. Makes several contacts with the 16S rRNA in the 70S ribosome. The polypeptide is Large ribosomal subunit protein uL2 (Kocuria rhizophila (strain ATCC 9341 / DSM 348 / NBRC 103217 / DC2201)).